The sequence spans 1823 residues: Laminin subunit alpha-4 (1823 aa).

The signal sequence occupies residues 1–24 (MALSSAWRSVLPLWLLWSAACSRA). Ser39 carries an O-linked (Xyl...) (chondroitin sulfate) serine glycan. Intrachain disulfides connect Cys82/Cys91, Cys84/Cys98, Cys101/Cys110, Cys113/Cys129, Cys132/Cys146, Cys134/Cys155, Cys157/Cys166, Cys169/Cys184, Cys187/Cys202, Cys189/Cys209, Cys212/Cys221, and Cys224/Cys238. 3 Laminin EGF-like domains span residues 82–131 (CDCN…FCQP), 132–186 (CPCP…TCKK), and 187–240 (CDCS…NCAV). Asn104 is a glycosylation site (N-linked (GlcNAc...) asparagine). N-linked (GlcNAc...) asparagine glycosylation is present at Asn215. A Laminin EGF-like 4; truncated domain is found at 241–255 (CNCGGGPCDSVTGEC). Residues 256–832 (LEEGFEPPTG…AQTRSVASKI (577 aa)) are domain II and I. Asn315 carries N-linked (GlcNAc...) asparagine glycosylation. The stretch at 320–403 (LLKTKLSERE…KIQEINNKML (84 aa)) forms a coiled coil. Residue Asn465 is glycosylated (N-linked (GlcNAc...) asparagine). A coiled-coil region spans residues 473-528 (VVLEQLDDYNAKLSDLQEALDQALNYVRDAEDMNRATAARQRDHEKQQERVREQME). Asn531, Asn557, Asn578, Asn581, Asn638, and Asn646 each carry an N-linked (GlcNAc...) asparagine glycan. Residues 581 to 614 (NLSHDLVQEAIDHAQDLQQEANELSRKLHSSDMN) are a coiled coil. Positions 662–724 (IIYHKDESEN…AVKQLQAAER (63 aa)) form a coiled coil. Positions 724–726 (RGD) match the Cell attachment site motif. Asn742, Asn758, Asn761, Asn787, and Asn810 each carry an N-linked (GlcNAc...) asparagine glycan. Positions 777-806 (AVNSARDAVRNLTEVVPQLLDQLRTVEQKR) form a coiled coil. 3 consecutive Laminin G-like domains span residues 833–1035 (QVSM…SVPC), 1047–1227 (AASY…GYGC), and 1234–1402 (SRRA…LYEC). Cys1005 and Cys1035 are joined by a disulfide. Asn1093 is a glycosylation site (N-linked (GlcNAc...) asparagine). Cys1201 and Cys1227 are joined by a disulfide. 2 N-linked (GlcNAc...) asparagine glycosylation sites follow: Asn1288 and Asn1366. Cys1370 and Cys1402 are joined by a disulfide. Asn1418 is a glycosylation site (N-linked (GlcNAc...) asparagine). Residues 1419–1440 (LSKPKASQNKKGGKSKDAPSWD) form a disordered region. 2 Laminin G-like domains span residues 1469 to 1640 (AYQY…VTPC) and 1647 to 1820 (TGTY…INSC). Disulfide bonds link Cys1617–Cys1640 and Cys1792–Cys1820.

In terms of assembly, laminin is a complex glycoprotein, consisting of three different polypeptide chains (alpha, beta, gamma), which are bound to each other by disulfide bonds into a cross-shaped molecule comprising one long and three short arms with globules at each end. Alpha-4 is a subunit of laminin-8 (laminin-411), laminin-9 (laminin-421) and laminin-14 (laminin-423). In terms of tissue distribution, detected in placenta (at protein level). Detected in fibroblasts and urine (at protein level). In adult, strong expression in heart, lung, ovary small and large intestines, placenta, liver; weak or no expression in skeletal muscle, kidney, pancreas, testis, prostate, brain. High expression in fetal lung and kidney. Expression in fetal and newborn tissues is observed in certain mesenchymal cells in tissues such as smooth muscle and dermis.

It localises to the secreted. The protein resides in the extracellular space. Its subcellular location is the extracellular matrix. It is found in the basement membrane. Binding to cells via a high affinity receptor, laminin is thought to mediate the attachment, migration and organization of cells into tissues during embryonic development by interacting with other extracellular matrix components. This Homo sapiens (Human) protein is Laminin subunit alpha-4 (LAMA4).